The primary structure comprises 461 residues: Cysteine--tRNA ligase (461 aa).

Cys-28 lines the Zn(2+) pocket. A 'HIGH' region motif is present at residues 30 to 40 (ITIYDLCHIGH). Positions 209, 234, and 238 each coordinate Zn(2+). The 'KMSKS' region signature appears at 266–270 (KMSKS). Lys-269 serves as a coordination point for ATP.

The protein belongs to the class-I aminoacyl-tRNA synthetase family. Monomer. It depends on Zn(2+) as a cofactor.

The protein resides in the cytoplasm. It catalyses the reaction tRNA(Cys) + L-cysteine + ATP = L-cysteinyl-tRNA(Cys) + AMP + diphosphate. In Yersinia pestis bv. Antiqua (strain Antiqua), this protein is Cysteine--tRNA ligase.